The sequence spans 391 residues: Aspartate carbamoyltransferase 3, chloroplastic (391 aa).

Residues 1-69 (MTASSSLFSC…SKCDKMIKTR (69 aa)) constitute a chloroplast transit peptide. 2 residues coordinate carbamoyl phosphate: Arg-137 and Thr-138. UMP is bound by residues Arg-137 and Thr-138. Residue Lys-167 participates in L-aspartate binding. Carbamoyl phosphate-binding residues include Arg-188, His-216, and Gln-219. Residues Arg-188 and His-216 each contribute to the UMP site. UMP-binding residues include Arg-249 and Arg-311. Arg-249 and Arg-311 together coordinate L-aspartate. Residues Leu-351 and Pro-352 each coordinate carbamoyl phosphate.

It belongs to the aspartate/ornithine carbamoyltransferase superfamily. ATCase family. In terms of assembly, homotrimer.

The protein resides in the plastid. Its subcellular location is the chloroplast. The enzyme catalyses carbamoyl phosphate + L-aspartate = N-carbamoyl-L-aspartate + phosphate + H(+). Its pathway is pyrimidine metabolism; UMP biosynthesis via de novo pathway; (S)-dihydroorotate from bicarbonate: step 2/3. Feedback inhibited by UMP. Its function is as follows. Catalyzes the condensation of carbamoyl phosphate and aspartate to form carbamoyl aspartate and inorganic phosphate, the committed step in the de novo pyrimidine nucleotide biosynthesis pathway. The protein is Aspartate carbamoyltransferase 3, chloroplastic (PYRB3) of Pisum sativum (Garden pea).